We begin with the raw amino-acid sequence, 1009 residues long: Regulator of telomere elongation helicase 1 homolog (1009 aa).

The Helicase ATP-binding domain occupies Ala-7–Ala-322. ATP is bound at residue Ser-42–Thr-49. [4Fe-4S] cluster contacts are provided by Cys-146, Cys-164, Cys-173, and Cys-209. The DEAH box motif lies at Asp-252–His-255.

This sequence belongs to the helicase family. RAD3/XPD subfamily.

The protein localises to the nucleus. It carries out the reaction ATP + H2O = ADP + phosphate + H(+). In terms of biological role, a probable ATP-dependent DNA helicase implicated in DNA repair and the maintenance of genomic stability. Acts as an anti-recombinase to counteract toxic recombination and limit crossover during meiosis. Regulates meiotic recombination and crossover homeostasis by physically dissociating strand invasion events and thereby promotes noncrossover repair by meiotic synthesis dependent strand annealing (SDSA) as well as disassembly of D loop recombination intermediates. This Drosophila persimilis (Fruit fly) protein is Regulator of telomere elongation helicase 1 homolog.